Here is a 306-residue protein sequence, read N- to C-terminus: Oligopeptide transport system permease protein OppB (306 aa).

The Cytoplasmic portion of the chain corresponds to 1–12 (MLKFILRRCLEA). The chain crosses the membrane as a helical span at residues 13-30 (IPTLFILITISFFMMRLA). Residues 31–101 (PGSPFTGERA…ASFPVSAKLG (71 aa)) are Periplasmic-facing. The 200-residue stretch at 94–293 (FPVSAKLGAA…ALTILFNAIV (200 aa)) folds into the ABC transmembrane type-1 domain. A helical transmembrane segment spans residues 102–121 (AAAFLLAVIIGVSAGVIAAL). At 122-133 (KQNTRWDYTVMG) the chain is on the cytoplasmic side. A helical transmembrane segment spans residues 134–156 (FAMTGVVIPSFVVAPLLVMVFAI). Topologically, residues 157-165 (TLQWLPGGG) are periplasmic. A helical transmembrane segment spans residues 166–188 (WNGGALKFMILPMVALSLAYIAS). Over 189–227 (IARITRGSMIEVLHSNFIRTARAKGLPMRRIIFRHALKP) the chain is Cytoplasmic. A helical transmembrane segment spans residues 228 to 250 (ALLPVLSYMGPAFVGIITGSMVI). The Periplasmic portion of the chain corresponds to 251-277 (ETIYGLPGIGQLFVNGALNRDYSLVLS). The helical transmembrane segment at 278–300 (LTILVGALTILFNAIVDVLYAVI) threads the bilayer. Over 301–306 (DPKIRY) the chain is Cytoplasmic.

The protein belongs to the binding-protein-dependent transport system permease family. OppBC subfamily. The complex is composed of two ATP-binding proteins (OppD and OppF), two transmembrane proteins (OppB and OppC) and a solute-binding protein (OppA).

It localises to the cell inner membrane. In terms of biological role, part of the ABC transporter complex OppABCDF involved in the uptake of oligopeptides, including the cell wall murein tripeptide L-alanyl-gamma-D-glutamyl-meso-diaminopimelate. Responsible for the translocation of the substrate across the membrane. Plays an important nutritional role and is involved in the recycling of cell wall peptides. This chain is Oligopeptide transport system permease protein OppB, found in Salmonella typhimurium (strain LT2 / SGSC1412 / ATCC 700720).